Reading from the N-terminus, the 118-residue chain is Ferredoxin-thioredoxin reductase, catalytic chain (118 aa).

Cysteine 56 provides a ligand contact to [4Fe-4S] cluster. The active-site Nucleophile is cysteine 58. Cysteine 58 and cysteine 88 are disulfide-bonded. Positions 75, 77, and 86 each coordinate [4Fe-4S] cluster.

Belongs to the ferredoxin thioredoxin reductase beta subunit family. Heterodimer of subunit A (variable subunit) and subunit B (catalytic subunit). Heterodimeric FTR forms a complex with ferredoxin and thioredoxin. Requires [4Fe-4S] cluster as cofactor.

It carries out the reaction [thioredoxin]-disulfide + 2 reduced [2Fe-2S]-[ferredoxin] + 2 H(+) = [thioredoxin]-dithiol + 2 oxidized [2Fe-2S]-[ferredoxin]. In terms of biological role, catalytic subunit of the ferredoxin-thioredoxin reductase (FTR), which catalyzes the two-electron reduction of thioredoxins by the electrons provided by reduced ferredoxin. The sequence is that of Ferredoxin-thioredoxin reductase, catalytic chain from Synechocystis sp. (strain ATCC 27184 / PCC 6803 / Kazusa).